An 829-amino-acid chain; its full sequence is Colorectal mutant cancer protein (829 aa).

Disordered regions lie at residues 114-139 (RSEL…TSVS), 282-320 (TRLQ…SSND), and 672-700 (EEQK…CADA). The segment covering 123 to 132 (EVNEDSRSMD) has biased composition (basic and acidic residues). Residues 285–312 (QSVQATGPSSPGRLTSTNRPINPSTGEL) are compositionally biased toward polar residues. A compositionally biased stretch (basic and acidic residues) spans 689–698 (SKDKPGKECA). The Nuclear localization signal signature appears at 766–782 (KRANSNLVAAYEKAKKK). Residues 826–829 (ETSL) carry the PDZ-binding motif. Ser828 carries the phosphoserine modification.

Belongs to the MCC family. In terms of assembly, interacts with SCRIB (via phosphorylated PDZ-binding motif), EZR, SNX27, NHERF1 and NHERF2. Interacts with CTNNB1; the interaction is enhanced upon Wnt stimulation. Interacts with MYH10. Interacts with CCAR2. As to expression, expressed in a variety of tissues.

The protein localises to the cell membrane. The protein resides in the cell projection. It is found in the lamellipodium. Its subcellular location is the nucleus. It localises to the cytoplasm. Its function is as follows. Candidate for the putative colorectal tumor suppressor gene located at 5q21. Suppresses cell proliferation and the Wnt/b-catenin pathway in colorectal cancer cells. Inhibits DNA binding of b-catenin/TCF/LEF transcription factors. Involved in cell migration independently of RAC1, CDC42 and p21-activated kinase (PAK) activation. Represses the beta-catenin pathway (canonical Wnt signaling pathway) in a CCAR2-dependent manner by sequestering CCAR2 to the cytoplasm, thereby impairing its ability to inhibit SIRT1 which is involved in the deacetylation and negative regulation of beta-catenin (CTNB1) transcriptional activity. This is Colorectal mutant cancer protein (MCC) from Homo sapiens (Human).